The following is a 495-amino-acid chain: Probable cytochrome P450 508C1 (495 aa).

A helical membrane pass occupies residues 3-21 (LLNSLLLLFLIYLIHSFYI). Residue Cys442 participates in heme binding.

This sequence belongs to the cytochrome P450 family. Heme is required as a cofactor.

It is found in the membrane. In Dictyostelium discoideum (Social amoeba), this protein is Probable cytochrome P450 508C1 (cyp508C1).